Reading from the N-terminus, the 81-residue chain is Sulfur carrier protein TusA (81 aa).

Cysteine 19 serves as the catalytic Cysteine persulfide intermediate.

The protein belongs to the sulfur carrier protein TusA family.

It is found in the cytoplasm. Sulfur carrier protein which probably makes part of a sulfur-relay system. The sequence is that of Sulfur carrier protein TusA from Aeromonas salmonicida (strain A449).